The following is a 274-amino-acid chain: Putative ABC transporter ATP-binding protein alr3946 (274 aa).

Residues 6 to 242 enclose the ABC transporter domain; it reads LTFEQVYYTY…REILDSIELG (237 aa). Residue 40 to 47 coordinates ATP; the sequence is GRNGCGKT.

Belongs to the ABC transporter superfamily.

It localises to the cell inner membrane. Its function is as follows. Probably part of an ABC transporter complex. Responsible for energy coupling to the transport system. The chain is Putative ABC transporter ATP-binding protein alr3946 from Nostoc sp. (strain PCC 7120 / SAG 25.82 / UTEX 2576).